Reading from the N-terminus, the 589-residue chain is CTP synthase (589 aa).

The interval 1 to 281 (MPQSRTHSRT…DAYVVRQLGL (281 aa)) is amidoligase domain. Ser-23 is a binding site for CTP. Ser-23 contacts UTP. ATP is bound by residues 24 to 29 (SLGKGL) and Asp-81. Positions 81 and 155 each coordinate Mg(2+). CTP is bound by residues 162–164 (DIE), 202–207 (KTKPTQ), and Lys-238. Residues 202-207 (KTKPTQ) and Lys-238 contribute to the UTP site. The region spanning 306 to 554 (RIALVGKYVD…VDAALRHKLE (249 aa)) is the Glutamine amidotransferase type-1 domain. An L-glutamine-binding site is contributed by Gly-369. Cys-396 functions as the Nucleophile; for glutamine hydrolysis in the catalytic mechanism. Residues 397–400 (LGLQ), Glu-419, and Arg-480 each bind L-glutamine. Residues His-527 and Glu-529 contribute to the active site. Residues 562 to 589 (HGEERAAADDEIAESADRDEVASVDSAG) are disordered.

The protein belongs to the CTP synthase family. Homotetramer.

The catalysed reaction is UTP + L-glutamine + ATP + H2O = CTP + L-glutamate + ADP + phosphate + 2 H(+). It carries out the reaction L-glutamine + H2O = L-glutamate + NH4(+). It catalyses the reaction UTP + NH4(+) + ATP = CTP + ADP + phosphate + 2 H(+). It participates in pyrimidine metabolism; CTP biosynthesis via de novo pathway; CTP from UDP: step 2/2. Allosterically activated by GTP, when glutamine is the substrate; GTP has no effect on the reaction when ammonia is the substrate. The allosteric effector GTP functions by stabilizing the protein conformation that binds the tetrahedral intermediate(s) formed during glutamine hydrolysis. Inhibited by the product CTP, via allosteric rather than competitive inhibition. Catalyzes the ATP-dependent amination of UTP to CTP with either L-glutamine or ammonia as the source of nitrogen. Regulates intracellular CTP levels through interactions with the four ribonucleotide triphosphates. The chain is CTP synthase from Rhodococcus opacus (strain B4).